Here is a 1002-residue protein sequence, read N- to C-terminus: Calcium-transporting ATPase sarcoplasmic/endoplasmic reticulum type (1002 aa).

Topologically, residues 1-48 are cytoplasmic; the sequence is MEDGHSKTVEQSLNFFGTDGERGLTLDQIKTNQAKYGPNELPTEEGKS. Residues 49–69 traverse the membrane as a helical segment; the sequence is IWQLVLEQFDDLLVKILLLAA. The Lumenal segment spans residues 70–89; sequence IISFVLALFEEHEETFTAFV. Residues 90 to 110 form a helical membrane-spanning segment; the sequence is EPLVILLILIANAVVGVWQER. Residues 111–253 are Cytoplasmic-facing; the sequence is NAESAIEALK…EIKTPLQQKL (143 aa). Residues 254–273 traverse the membrane as a helical segment; the sequence is DEFGEQLSKVISVICVAVWA. At 274 to 295 the chain is on the lumenal side; that stretch reads INIGHFNDPAHGGSWIKGAIYY. The chain crosses the membrane as a helical span at residues 296–313; that stretch reads FKIAVALAVAAIPEGLPA. Positions 304, 305, 307, and 309 each coordinate Ca(2+). Residues 314 to 757 are Cytoplasmic-facing; the sequence is VITTCLALGT…EEGRAIYNNM (444 aa). Catalysis depends on aspartate 351, which acts as the 4-aspartylphosphate intermediate. The Mg(2+) site is built by aspartate 703 and aspartate 707. The chain crosses the membrane as a helical span at residues 758–777; that stretch reads KQFIRYLISSNIGEVVSIFL. Residues asparagine 768 and glutamate 771 each contribute to the Ca(2+) site. Residues 778–787 lie on the Lumenal side of the membrane; it reads TAALGLPEAL. Residues 788–808 traverse the membrane as a helical segment; that stretch reads IPVQLLWVNLVTDGLPATALG. Positions 796, 799, and 800 each coordinate Ca(2+). The Cytoplasmic segment spans residues 809–828; it reads FNPPDLDIMDKPPRKADEGL. A helical membrane pass occupies residues 829–851; that stretch reads ISGWLFFRYMAIGFYVGAATVGA. The Lumenal portion of the chain corresponds to 852–897; that stretch reads AAWWFIASSEGPGLTYWQLTHHLSCLGGGDEFKGVDCKIFSDPKAM. A helical transmembrane segment spans residues 898 to 917; that stretch reads TMALSVLVTIEMLNAMNSLS. Residue glutamate 908 participates in Ca(2+) binding. The Cytoplasmic portion of the chain corresponds to 918–930; it reads ENQSLISMPPWCN. Residues 931–949 form a helical membrane-spanning segment; sequence LWLIGSMALSFTLHFVILY. The Lumenal portion of the chain corresponds to 950–964; it reads VDVLSTVFQVTPLSA. A helical transmembrane segment spans residues 965-985; it reads EEWITVMKFSIPVVLLDETLK. The Cytoplasmic portion of the chain corresponds to 986 to 1002; it reads FVARKIADVPDAVVDKW.

Belongs to the cation transport ATPase (P-type) (TC 3.A.3) family.

Its subcellular location is the endoplasmic reticulum membrane. It is found in the sarcoplasmic reticulum membrane. It carries out the reaction Ca(2+)(in) + ATP + H2O = Ca(2+)(out) + ADP + phosphate + H(+). This magnesium-dependent enzyme catalyzes the hydrolysis of ATP coupled with the transport of calcium. This is Calcium-transporting ATPase sarcoplasmic/endoplasmic reticulum type from Drosophila pseudoobscura pseudoobscura (Fruit fly).